Reading from the N-terminus, the 150-residue chain is Large ribosomal subunit protein bL9 (150 aa).

Belongs to the bacterial ribosomal protein bL9 family.

Binds to the 23S rRNA. This chain is Large ribosomal subunit protein bL9, found in Shewanella sediminis (strain HAW-EB3).